Reading from the N-terminus, the 322-residue chain is Mitochondrial uncoupling protein 4 (322 aa).

Solcar repeat units lie at residues 20-114 (SKFL…LREV), 124-216 (YPLW…VKHY), and 225-316 (DNIS…IREM). A run of 6 helical transmembrane segments spans residues 22–39 (FLLSGCAATVAELATFPL), 87–108 (WQGVTPAIYRHVVYSGGRMVTY), 126–143 (LWKSVIGGMMAGVIGQFL), 194–211 (PNIQRAALVNMGDLTTYD), 228–247 (STHGLSSLCSGLVASILGTP), and 287–310 (SLYKGFLPSWLRMTPWSMVFWLTY).

It belongs to the mitochondrial carrier (TC 2.A.29) family. In terms of assembly, homotetramer.

The protein localises to the mitochondrion inner membrane. It is found in the cell projection. It localises to the neuron projection. The enzyme catalyses H(+)(in) = H(+)(out). The catalysed reaction is chloride(in) = chloride(out). In terms of biological role, facilitates proton transport across the inner mitochondrial membrane and may dissipate excessive proton gradient associated with oxidative and metabolic stress at neuronal synapses. Regulates glutamate-induced proton conductance in astrocytes, shifting the energy metabolism toward aerobic glycolysis and lactate transfer to neurons for ATP synthesis. Can transport chloride ions with lower efficiency. The transport mechanism remains to be elucidated. This chain is Mitochondrial uncoupling protein 4, found in Mus musculus (Mouse).